Reading from the N-terminus, the 332-residue chain is Adenine deaminase (332 aa).

Zn(2+) is bound by residues histidine 14, histidine 16, and histidine 194. The Proton donor role is filled by glutamate 197. Aspartate 275 provides a ligand contact to Zn(2+). Residue aspartate 276 coordinates substrate.

Belongs to the metallo-dependent hydrolases superfamily. Adenosine and AMP deaminases family. Adenine deaminase type 2 subfamily. Requires Zn(2+) as cofactor.

It carries out the reaction adenine + H2O + H(+) = hypoxanthine + NH4(+). In terms of biological role, catalyzes the hydrolytic deamination of adenine to hypoxanthine. Plays an important role in the purine salvage pathway and in nitrogen catabolism. In Psychrobacter cryohalolentis (strain ATCC BAA-1226 / DSM 17306 / VKM B-2378 / K5), this protein is Adenine deaminase.